The following is a 1134-amino-acid chain: TBC1 domain family member 8 (1134 aa).

2 consecutive GRAM domains span residues 145 to 212 and 285 to 353; these read VKFE…ERTS and EFFR…EKME. Positions 433-466 are disordered; that stretch reads ASQSSEEREEKRPLPHPEPLTAVFQQSGSQSPDS. A compositionally biased stretch (basic and acidic residues) spans 437-447; sequence SEEREEKRPLP. Residues 455–466 are compositionally biased toward polar residues; sequence VFQQSGSQSPDS. The Rab-GAP TBC domain maps to 504–691; that stretch reads GIPESLRGRL…HVVDCFFYDG (188 aa). A disordered region spans residues 1034–1070; the sequence is SSSGSCSQECEEPQASAPPEQDSVFAEAGKSPQAFPE.

May act as a GTPase-activating protein for Rab family protein(s). The chain is TBC1 domain family member 8 (Tbc1d8) from Mus musculus (Mouse).